We begin with the raw amino-acid sequence, 533 residues long: Putative adhesin domain-containing protein LiaX (533 aa).

A binds the antibiotic daptomycin (DAP) and the antimicrobial peptide human LL-37, under physiologically relevant concentrations. Protects the OG1RF and S613 strains from LL-37-mediated killing in a concentration-dependent manner region spans residues 1–277; sequence MKERERVLEL…EFNYPNPQAS (277 aa). A disordered region spans residues 63 to 89; it reads NALEKGESEGPTVDSFEENTQDSAEKD. The stretch at 83 to 186 forms a coiled coil; the sequence is QDSAEKDREN…EEELKNIRKE (104 aa). The segment at 279 to 526 is putative adhesin region; that stretch reads IDVKVANGTV…INASTTTGSI (248 aa). Positions 289 to 526 are involved in cell membrane remodeling; it reads VFKTWDQEDV…INASTTTGSI (238 aa).

Post-translationally, may undergo proteolytic cleavage, allowing release of the N-terminal region into the extracellular environment.

Its subcellular location is the secreted. It localises to the cell wall. The protein localises to the cell membrane. Involved in cell membrane remodeling, perhaps acting by negative modulation of the liaFSR and liaXYZ gene clusters, thereby regulating content and localization of anionic phospholipids. Binds to the antibiotic daptomycin (DAP) and to cationic antimicrobial peptides, such as human LL-37, perhaps functioning as a sensor that activates the cell envelope stress response. The chain is Putative adhesin domain-containing protein LiaX from Enterococcus faecalis (strain ATCC 700802 / V583).